Consider the following 184-residue polypeptide: NADH-quinone oxidoreductase subunit B 1 (184 aa).

[4Fe-4S] cluster is bound by residues Cys37, Cys38, Cys103, and Cys132.

The protein belongs to the complex I 20 kDa subunit family. In terms of assembly, NDH-1 is composed of 14 different subunits. Subunits NuoB, C, D, E, F, and G constitute the peripheral sector of the complex. The cofactor is [4Fe-4S] cluster.

Its subcellular location is the cell membrane. It carries out the reaction a quinone + NADH + 5 H(+)(in) = a quinol + NAD(+) + 4 H(+)(out). In terms of biological role, NDH-1 shuttles electrons from NADH, via FMN and iron-sulfur (Fe-S) centers, to quinones in the respiratory chain. The immediate electron acceptor for the enzyme in this species is believed to be a menaquinone. Couples the redox reaction to proton translocation (for every two electrons transferred, four hydrogen ions are translocated across the cytoplasmic membrane), and thus conserves the redox energy in a proton gradient. The sequence is that of NADH-quinone oxidoreductase subunit B 1 from Streptomyces coelicolor (strain ATCC BAA-471 / A3(2) / M145).